Here is a 135-residue protein sequence, read N- to C-terminus: ATP synthase epsilon chain (135 aa).

This sequence belongs to the ATPase epsilon chain family. In terms of assembly, F-type ATPases have 2 components, CF(1) - the catalytic core - and CF(0) - the membrane proton channel. CF(1) has five subunits: alpha(3), beta(3), gamma(1), delta(1), epsilon(1). CF(0) has three main subunits: a, b and c.

The protein resides in the cell inner membrane. In terms of biological role, produces ATP from ADP in the presence of a proton gradient across the membrane. The chain is ATP synthase epsilon chain from Hyphomonas neptunium (strain ATCC 15444).